A 324-amino-acid polypeptide reads, in one-letter code: Adducin-related protein C1289.14 (324 aa).

Belongs to the aldolase class II family. Adducin subfamily.

In Schizosaccharomyces pombe (strain 972 / ATCC 24843) (Fission yeast), this protein is Adducin-related protein C1289.14.